The chain runs to 211 residues: Vascular-related unknown protein 1 (211 aa).

Positions 1-12 (MMDTFSCNSYEQ) are enriched in polar residues. Positions 1 to 40 (MMDTFSCNSYEQNHPHDDDIDIDAHDHDSHGGDHQEESGW) are disordered. Over residues 13 to 37 (NHPHDDDIDIDAHDHDSHGGDHQEE) the composition is skewed to basic and acidic residues.

Expressed in vascular tissues of cotyledons, rosette leaves, sepals, petals, anther filaments. Expressed in roots, inflorescence stems and developing seeds.

The protein localises to the cytoplasm. The protein resides in the nucleus. Functionally, involved in the regulation of xylem development and growth. May regulate secondary wall formation during vascular development by modulation of brassinosteroid, gibberellin and auxin hormone signaling pathways. The protein is Vascular-related unknown protein 1 of Arabidopsis thaliana (Mouse-ear cress).